Here is a 99-residue protein sequence, read N- to C-terminus: Beta-2-microglobulin (99 aa).

An Ig-like C1-type domain is found at 5-93; that stretch reads PRVQVYSRHP…HITLSEPKIV (89 aa). C25 and C80 are oxidised to a cystine.

Belongs to the beta-2-microglobulin family. As to quaternary structure, heterodimer of an alpha chain and a beta chain. Beta-2-microglobulin is the beta-chain of major histocompatibility complex class I molecules.

It localises to the secreted. Component of the class I major histocompatibility complex (MHC). Involved in the presentation of peptide antigens to the immune system. The sequence is that of Beta-2-microglobulin (B2M) from Cavia porcellus (Guinea pig).